A 639-amino-acid polypeptide reads, in one-letter code: ATP-dependent zinc metalloprotease FtsH (639 aa).

Residues 1 to 15 (MDNEKQASPPPAAPP) are Cytoplasmic-facing. A helical membrane pass occupies residues 16-36 (LNWRYLLWIILLGIFLISWLG). The Periplasmic segment spans residues 37 to 123 (NAGRQAGDEI…VQAKSEEPSL (87 aa)). The chain crosses the membrane as a helical span at residues 124–144 (WMQAIIGILPWFLILGLIFYV). Topologically, residues 145 to 639 (SYRMQQRMMG…HNEAVATGAG (495 aa)) are cytoplasmic. Position 221–228 (221–228 (GRPGTGKT)) interacts with ATP. H442 is a binding site for Zn(2+). Residue E443 is part of the active site. Zn(2+) is bound by residues H446 and D518.

The protein in the central section; belongs to the AAA ATPase family. This sequence in the C-terminal section; belongs to the peptidase M41 family. Homohexamer. The cofactor is Zn(2+).

It is found in the cell inner membrane. In terms of biological role, acts as a processive, ATP-dependent zinc metallopeptidase for both cytoplasmic and membrane proteins. Plays a role in the quality control of integral membrane proteins. This chain is ATP-dependent zinc metalloprotease FtsH, found in Nitrosococcus oceani (strain ATCC 19707 / BCRC 17464 / JCM 30415 / NCIMB 11848 / C-107).